The sequence spans 289 residues: G1/S-specific cyclin-D2 (289 aa).

A Cyclin N-terminal domain is found at 26–151 (LQNLLTIEER…VLGKLKWNLA (126 aa)). The tract at residues 264-289 (QHNAGSKSVEDPDQATTPTDVRDVDL) is disordered. S271 bears the Phosphoserine mark. A Phosphothreonine modification is found at T280.

The protein belongs to the cyclin family. Cyclin D subfamily. Interacts with either CDK4 or CDK6 protein kinase to form a serine/threonine kinase holoenzyme complex. The cyclin subunit imparts substrate specificity to the complex. Phosphorylation at Thr-280 by MAP kinases is required for ubiquitination and degradation by the DCX(AMBRA1) complex. In terms of processing, ubiquitinated by the DCX(AMBRA1) complex during the transition from G1 to S cell phase, leading to its degradation: ubiquitination is dependent on Thr-280 phosphorylation. The DCX(AMBRA1) complex represents the major regulator of CCND2 stability during the G1/S transition. Polyubiquitinated by the SCF(FBXL2) complex, leading to proteasomal degradation.

The protein resides in the nucleus. Its subcellular location is the cytoplasm. The protein localises to the nucleus membrane. Regulatory component of the cyclin D2-CDK4 (DC) complex that phosphorylates and inhibits members of the retinoblastoma (RB) protein family including RB1 and regulates the cell-cycle during G(1)/S transition. Phosphorylation of RB1 allows dissociation of the transcription factor E2F from the RB/E2F complex and the subsequent transcription of E2F target genes which are responsible for the progression through the G(1) phase. Hypophosphorylates RB1 in early G(1) phase. Cyclin D-CDK4 complexes are major integrators of various mitogenenic and antimitogenic signals. The protein is G1/S-specific cyclin-D2 of Mus musculus (Mouse).